Reading from the N-terminus, the 89-residue chain is Co-chaperonin GroES (89 aa).

It belongs to the GroES chaperonin family. In terms of assembly, heptamer of 7 subunits arranged in a ring. Interacts with the chaperonin GroEL.

It is found in the cytoplasm. In terms of biological role, together with the chaperonin GroEL, plays an essential role in assisting protein folding. The GroEL-GroES system forms a nano-cage that allows encapsulation of the non-native substrate proteins and provides a physical environment optimized to promote and accelerate protein folding. GroES binds to the apical surface of the GroEL ring, thereby capping the opening of the GroEL channel. The protein is Co-chaperonin GroES of Porphyromonas gingivalis (strain ATCC 33277 / DSM 20709 / CIP 103683 / JCM 12257 / NCTC 11834 / 2561).